A 161-amino-acid polypeptide reads, in one-letter code: Globin CTT-VIIB-3 (161 aa).

An N-terminal signal peptide occupies residues 1-16 (MKFFAVLALCIVGAIA). The Globin domain maps to 18-161 (PLTADEASLV…NTYAIVVPRL (144 aa)). Heme b is bound by residues His76 and His111.

It belongs to the globin family. Homodimer.

The polypeptide is Globin CTT-VIIB-3 (CTT-7B3) (Chironomus thummi thummi (Midge)).